A 667-amino-acid polypeptide reads, in one-letter code: MASVRAAVGASLAVARTRPRCVGLALPSSAPRSAWAAAMEPTPRWLAGLRFDNRALRELPVETPPPGPEDSLATPRPVPGACFSRARPAPLRRPRLVALSEPALALLGLEASEEAEVEAEAALFFSGNALLPGTEPAAHCYCGHQFGQFAGQLGDGAAMYLGEVCTAAGERWELQLKGAGPTPFSRQADGRKVLRSSIREFLCSEAMFHLGIPTTRAGACVTSESTVMRDVFYDGNPKYEKCTVVLRIAPTFIRFGSFEIFKPPDEHTGRAGPSVGRDDIRVQLLDYVISSFYPEIQAAHTCDTDNIQRNAAFFREVTQRTARMVAEWQCVGFCHGVLNTDNMSIVGLTIDYGPFGFLDRYDPDHICNASDNAGRYTYSKQPQVCKWNLQKLAEALEPELPLALAEAILKEEFDTEFQRHYLQKMRKKLGLIRVEKEEDGTLVAKLLETMHLTGADFTNTFCVLSSFPADLSDSAEFLSRLTSQCASLEELRLAFRPQMDPRQLSMMLMLAQSNPQLFALIGTQANVTKELERVEHQSRLEQLSPSDLQRKNRDHWEAWLQEYRDRLDKEKEGVGDTAAWQAERVRVMRANNPKYVLRNYIAQKAIEAAENGDFSEVRRVLKLLESPYHSEEEATGPEAVARSTEEQSSYSNRPPLWAAELCVTUSS.

A mitochondrion-targeting transit peptide spans 1–6; sequence MASVRA. The ATP site is built by G154, G156, K177, D189, G190, R247, and R254. D341 serves as the catalytic Proton acceptor. 2 residues coordinate Mg(2+): N342 and D351. D351 provides a ligand contact to ATP. Positions 628 to 652 are disordered; sequence YHSEEEATGPEAVARSTEEQSSYSN. T635 bears the Phosphothreonine mark. The residue at position 651 (S651) is a Phosphoserine. U665 is a non-standard amino acid (selenocysteine).

Belongs to the SELO family. Requires Mg(2+) as cofactor.

The protein localises to the mitochondrion. It carries out the reaction L-tyrosyl-[protein] + ATP = O-(5'-adenylyl)-L-tyrosyl-[protein] + diphosphate. It catalyses the reaction L-threonyl-[protein] + ATP = 3-O-(5'-adenylyl)-L-threonyl-[protein] + diphosphate. The catalysed reaction is L-seryl-[protein] + ATP = 3-O-(5'-adenylyl)-L-seryl-[protein] + diphosphate. Catalyzes the transfer of adenosine 5'-monophosphate (AMP) to Ser, Thr and Tyr residues of target proteins (AMPylation). May be a redox-active mitochondrial selenoprotein which interacts with a redox target protein. The chain is Protein adenylyltransferase SelO, mitochondrial from Mus musculus (Mouse).